A 369-amino-acid chain; its full sequence is NAD-dependent epimerase/dehydratase FUM13 (369 aa).

Tyr176 is a binding site for NADP(+).

Belongs to the NAD(P)-dependent epimerase/dehydratase family. Dihydroflavonol-4-reductase subfamily.

It participates in mycotoxin biosynthesis. NAD-dependent epimerase/dehydratase; part of the gene cluster that mediates the biosynthesis of fumonisins B1 (FB1), B2 (FB2), B3 (FB3), and B4 (FB4), which are carcinogenic mycotoxins. Within the pathway, FUM13 stereospecifically reduces the intermediate 3-keto intermediate 2-amino-3-oxo-12,16-dimethylicosane to the 3-hydroxyl product 2-amino-3-hydroxy-12,16-dimethylicosane. The biosynthesis starts with the FUM1-catalyzed carbon chain assembly from one molecule of acetyl-CoA, eight molecules of malonyl-CoA, and two molecules of methionine (in S-adenosyl form). The C18 polyketide chain is released from the enzyme by a nucleophilic attack of a carbanion, which is derived from R-carbon of alanine by decarboxylation, on the carbonyl carbon of polyketide acyl chain. This step is catalyzed by the pyridoxal 5'-phosphate-dependent aminoacyl transferase FUM8. The resultant 3-keto intermediate is then stereospecifically reduced to a 3-hydroxyl product by reductase FUM13. Subsequent oxidations at C-10 by the cytochrome P450 monooxygenase FUM2, C-14 and C-15 by FUM6, FUM12 or FUM15, tricarballylic esterification of the hydroxyl groups on C-14 and C-15 by acyltransferase FUM14, and C-5 hydroxylation by 2-keto-glutarate-dependent dioxygenase FUM3 furnish the biosynthesis of fumonisins. The tricarballylic moieties are most likely derived from the citric acid cycle, and their addition to the carbon backbone may involve FUM7, FUM10, FUM11 and FUM14. This is NAD-dependent epimerase/dehydratase FUM13 from Gibberella moniliformis (strain M3125 / FGSC 7600) (Maize ear and stalk rot fungus).